The primary structure comprises 406 residues: DNA primase large subunit PriL (406 aa).

Cys-302, Cys-375, Cys-384, and Cys-389 together coordinate [4Fe-4S] cluster.

It belongs to the eukaryotic-type primase large subunit family. As to quaternary structure, heterodimer of a small subunit (PriS) and a large subunit (PriL). It depends on [4Fe-4S] cluster as a cofactor.

Its function is as follows. Regulatory subunit of DNA primase, an RNA polymerase that catalyzes the synthesis of short RNA molecules used as primers for DNA polymerase during DNA replication. Stabilizes and modulates the activity of the small subunit, increasing the rate of DNA synthesis, and conferring RNA synthesis capability. The DNA polymerase activity may enable DNA primase to also catalyze primer extension after primer synthesis. May also play a role in DNA repair. The polypeptide is DNA primase large subunit PriL (Methanopyrus kandleri (strain AV19 / DSM 6324 / JCM 9639 / NBRC 100938)).